Consider the following 779-residue polypeptide: Neutral ceramidase 1 (779 aa).

The active-site Nucleophile is the serine 350. N-linked (GlcNAc...) asparagine glycans are attached at residues asparagine 368, asparagine 432, and asparagine 667.

Belongs to the neutral ceramidase family. Mostly expressed in stems, leaves, roots and siliques, and, to a lower extent, in flowers.

The protein resides in the secreted. The protein localises to the endoplasmic reticulum. It localises to the golgi apparatus. The catalysed reaction is an N-acylsphing-4-enine + H2O = sphing-4-enine + a fatty acid. Functionally, hydrolyzes the sphingolipid ceramide into sphingosine and free fatty acid. Regulates sphingolipid homeostasis. Promotes oxidative stress resistance. This chain is Neutral ceramidase 1, found in Arabidopsis thaliana (Mouse-ear cress).